The following is a 116-amino-acid chain: MKKKYRIKKNKEFQEVFQRGTSMANRQFVIYMLDRPEQPYFRIGLSVSKKLGKAVVRNRIKRYIRQVFLEMKDDIMPQKDYVIIARLPVAEMTYFEVKKSLLHVLRKAGALKRDIK.

The protein belongs to the RnpA family. In terms of assembly, consists of a catalytic RNA component (M1 or rnpB) and a protein subunit.

The catalysed reaction is Endonucleolytic cleavage of RNA, removing 5'-extranucleotides from tRNA precursor.. RNaseP catalyzes the removal of the 5'-leader sequence from pre-tRNA to produce the mature 5'-terminus. It can also cleave other RNA substrates such as 4.5S RNA. The protein component plays an auxiliary but essential role in vivo by binding to the 5'-leader sequence and broadening the substrate specificity of the ribozyme. In Geobacillus sp. (strain WCH70), this protein is Ribonuclease P protein component.